The following is a 228-amino-acid chain: Probable GTP-binding protein EngB (228 aa).

Residues 48–222 enclose the EngB-type G domain; that stretch reads YGLEVAFVGY…QFVLNNWFSS (175 aa). Residues 56–63, 83–87, 101–104, 168–171, and 201–203 each bind GTP; these read GYSNSGKS, GRTRL, DFPG, NKMD, and FSS. Residues Ser63 and Thr85 each coordinate Mg(2+).

It belongs to the TRAFAC class TrmE-Era-EngA-EngB-Septin-like GTPase superfamily. EngB GTPase family. It depends on Mg(2+) as a cofactor.

Functionally, necessary for normal cell division and for the maintenance of normal septation. In Buchnera aphidicola subsp. Baizongia pistaciae (strain Bp), this protein is Probable GTP-binding protein EngB.